The primary structure comprises 471 residues: FAD-dependent monooxygenase andE (471 aa).

3 residues coordinate FAD: glutamate 35, glycine 49, and arginine 108. Tyrosine 216 is an active-site residue. Positions 308 and 321 each coordinate FAD. 2 consecutive transmembrane segments (helical) span residues 403–423 (LANI…LPFP) and 443–463 (TPFA…LLGL).

This sequence belongs to the paxM FAD-dependent monooxygenase family. It depends on FAD as a cofactor.

The protein resides in the membrane. Its pathway is secondary metabolite biosynthesis; terpenoid biosynthesis. In terms of biological role, FAD-dependent monooxygenase; part of the gene cluster that mediates the biosynthesis of anditomin, a fungal meroterpenoid. The first step of the pathway is the synthesis of 3,5-dimethylorsellinic acid (DMOA) by the polyketide synthase andM. DMOA is then converted to the phthalide compound 5,7-dihydroxy-4,6-dimethylphthalide (DHDMP) by the cytochrome P450 monooxygenase andK, which is further prenylated by the prenyltransferase andD to yield farnesyl-DHDMP. Further epoxidation by the FAD-dependent monooxygenase andE leads to epoxyfarnesyl-DHDMP. The next step involves the terpene cyclase andB that converts epoxyfarnesyl-DHDMP into preandiloid A through opening of the epoxide ring followed by the cyclization of the farnesyl moiety. Preandiloid A is in turn oxidized at the C-3 hydroxyl group to yield preandiloid B by the dehydrogenase andC. The dioxygenase andA is solely responsible for the dehydrogenation of preandiloid B leading to the enone preandiloid C, as well as for the intriguing structural rearrangement to generate the bicyclo[2.2.2]octane core, transforming preandiloid C into andiconin. FAD-binding monooxygenase andJ then produces andilesin D which is reduced by dehydrogenase andI to yield andilesin A. Action of acetyltransferase andG followed by a spontaneous acetate elimination leads then to andilesin B, which is in turn substrate of the short chain dehydrogenase andH to yield andilesin C. Finally, the dioxygenase andF catalyzes the transformation of andilesin C to anditomin. The chain is FAD-dependent monooxygenase andE from Emericella variicolor (Aspergillus stellatus).